A 249-amino-acid chain; its full sequence is Triosephosphate isomerase (249 aa).

Substrate-binding residues include Asn-10 and Lys-12. His-94 functions as the Electrophile in the catalytic mechanism. Catalysis depends on Glu-166, which acts as the Proton acceptor.

This sequence belongs to the triosephosphate isomerase family. As to quaternary structure, homodimer. The N-terminus is blocked.

It carries out the reaction D-glyceraldehyde 3-phosphate = dihydroxyacetone phosphate. It participates in carbohydrate biosynthesis; gluconeogenesis. Its pathway is carbohydrate degradation; glycolysis; D-glyceraldehyde 3-phosphate from glycerone phosphate: step 1/1. The sequence is that of Triosephosphate isomerase (TPI1) from Paracoccidioides lutzii (strain ATCC MYA-826 / Pb01) (Paracoccidioides brasiliensis).